The sequence spans 189 residues: uncharacterized protein (189 aa).

This sequence belongs to the inositol monophosphatase superfamily.

This is an uncharacterized protein from Leptospira biflexa.